The following is a 557-amino-acid chain: Urocanate hydratase (557 aa).

Positions 1-20 (MSNPRHNEREVRSPRGDELN) are disordered. NAD(+)-binding positions include 52–53 (GG), Gln130, 176–178 (GMG), Glu196, Arg201, 242–243 (NA), 263–267 (QTSAH), 273–274 (YL), and Tyr322. The active site involves Cys410. Residue Gly492 participates in NAD(+) binding.

The protein belongs to the urocanase family. NAD(+) serves as cofactor.

It localises to the cytoplasm. It catalyses the reaction 4-imidazolone-5-propanoate = trans-urocanate + H2O. It participates in amino-acid degradation; L-histidine degradation into L-glutamate; N-formimidoyl-L-glutamate from L-histidine: step 2/3. Its function is as follows. Catalyzes the conversion of urocanate to 4-imidazolone-5-propionate. In Brucella melitensis biotype 2 (strain ATCC 23457), this protein is Urocanate hydratase.